Consider the following 582-residue polypeptide: Putative frv operon regulatory protein (582 aa).

A DNA-binding region (H-T-H motif) is located at residues 20 to 39; sequence PGELAQQTGVSGRTILRDID. Residues 443–582 form the PTS EIIA type-2 domain; that stretch reads RFFSAPGSFH…EAFMELLHKG (140 aa). H505 bears the Phosphohistidine; by HPr mark.

In terms of biological role, could be involved in the regulation of the transcription of the FRV operon. In Escherichia coli (strain K12), this protein is Putative frv operon regulatory protein (frvR).